Reading from the N-terminus, the 615-residue chain is Nuclear receptor subfamily 1 group D member 1 (615 aa).

Polar residues predominate over residues methionine 1–glycine 12. The interval methionine 1–serine 70 is required for phosphorylation by CSNK1E and cytoplasmic localization. Residues methionine 1 to threonine 120 form a disordered region. Residues methionine 1–methionine 129 form a modulating region. Residues isoleucine 14 to serine 34 are compositionally biased toward low complexity. The span at aspartate 35 to cysteine 48 shows a compositional bias: polar residues. The tract at residues proline 49–threonine 285 is crucial for activation of GJA1. Residues serine 55 and serine 59 each carry the phosphoserine; by GSK3-beta modification. The span at serine 70 to serine 94 shows a compositional bias: low complexity. A DNA-binding region (nuclear receptor) is located at residues valine 130–phenylalanine 206. 2 consecutive NR C4-type zinc fingers follow at residues cysteine 133–cysteine 153 and cysteine 170–cysteine 194. Residues lysine 192 and lysine 193 each carry the N6-acetyllysine; by KAT5 modification. Disordered stretches follow at residues leucine 235–methionine 286 and proline 312–cysteine 337. Low complexity predominate over residues threonine 240 to glycine 252. A compositionally biased stretch (pro residues) spans proline 253–threonine 262. Threonine 275 is subject to Phosphothreonine; by CDK1. In terms of domain architecture, NR LBD spans threonine 285–glutamine 615. The span at proline 312–threonine 328 shows a compositional bias: polar residues. Cysteine 419 contributes to the heme binding site. Position 592 is an N6-acetyllysine (lysine 592). Histidine 603 serves as a coordination point for heme.

It belongs to the nuclear hormone receptor family. NR1 subfamily. Binds DNA as a monomer or a homodimer. Interacts with NR2E3 and ZNHIT1. Interacts with C1D. Interacts with SP1. Interacts with OPHN1 (via C-terminus). Interacts with PER2; the interaction associates PER2 to BMAL1 promoter region. Interacts with CRY1. Interacts with CCAR2. Interacts with SIAH2. Interacts with FBXW7 and CDK1. Interacts with HUWE1. Interacts with NR0B2. Interacts with NFIL3. Interacts (via domain NR LBD) with HSP90AA1 and HSP90AB1. Post-translationally, ubiquitinated, leading to its proteasomal degradation. Ubiquitinated by the SCF(FBXW7) complex when phosphorylated by CDK1 leading to its proteasomal degradation. Ubiquitinated by SIAH2; leading to its proteasomal degradation. Rapidly ubiquitinated in response to inflammatory triggers and sumoylation is a prerequisite to its ubiquitination. Sumoylated by UBE2I, desumoylated by SENP1, and sumoylation is a prerequisite to its ubiquitination. In terms of processing, phosphorylated by CSNK1E; phosphorylation enhances its cytoplasmic localization. Post-translationally, undergoes lysosome-mediated degradation in a time-dependent manner in the liver. In terms of tissue distribution, expressed during adipocyte differentiation (at protein level). Expressed in skeletal muscle, bladder, lumbar spinal cord, pancreatic islets and hypothalamus. Expressed in developing and adult retina. In the adult retina, predominantly expressed in the outer nuclear layer, where rod and cone cells reside, and also localized to the ganglion cell layer. Expressed in a circadian manner in the liver. Expressed in a circadian manner in the lung with a peak between ZT8 and ZT12.

The protein resides in the nucleus. It is found in the cytoplasm. Its subcellular location is the cell projection. It localises to the dendrite. The protein localises to the dendritic spine. Its function is as follows. Transcriptional repressor which coordinates circadian rhythm and metabolic pathways in a heme-dependent manner. Integral component of the complex transcription machinery that governs circadian rhythmicity and forms a critical negative limb of the circadian clock by directly repressing the expression of core clock components BMAL1, CLOCK and CRY1. Also regulates genes involved in metabolic functions, including lipid and bile acid metabolism, adipogenesis, gluconeogenesis and the macrophage inflammatory response. Acts as a receptor for heme which stimulates its interaction with the NCOR1/HDAC3 corepressor complex, enhancing transcriptional repression. Recognizes two classes of DNA response elements within the promoter of its target genes and can bind to DNA as either monomers or homodimers, depending on the nature of the response element. Binds as a monomer to a response element composed of the consensus half-site motif 5'-[A/G]GGTCA-3' preceded by an A/T-rich 5' sequence (RevRE), or as a homodimer to a direct repeat of the core motif spaced by two nucleotides (RevDR-2). Acts as a potent competitive repressor of ROR alpha (RORA) function and regulates the levels of its ligand heme by repressing the expression of PPARGC1A, a potent inducer of heme synthesis. Regulates lipid metabolism by repressing the expression of APOC3 and by influencing the activity of sterol response element binding proteins (SREBPs); represses INSIG2 which interferes with the proteolytic activation of SREBPs which in turn govern the rhythmic expression of enzymes with key functions in sterol and fatty acid synthesis. Regulates gluconeogenesis via repression of G6PC1 and PEPCK and adipocyte differentiation via repression of PPARG. Regulates glucagon release in pancreatic alpha-cells via the AMPK-NAMPT-SIRT1 pathway and the proliferation, glucose-induced insulin secretion and expression of key lipogenic genes in pancreatic-beta cells. Positively regulates bile acid synthesis by increasing hepatic expression of CYP7A1 via repression of NR0B2 and NFIL3 which are negative regulators of CYP7A1. Modulates skeletal muscle oxidative capacity by regulating mitochondrial biogenesis and autophagy; controls mitochondrial biogenesis and respiration by interfering with the STK11-PRKAA1/2-SIRT1-PPARGC1A signaling pathway. Represses the expression of SERPINE1/PAI1, an important modulator of cardiovascular disease and the expression of inflammatory cytokines and chemokines in macrophages. Represses gene expression at a distance in macrophages by inhibiting the transcription of enhancer-derived RNAs (eRNAs). Plays a role in the circadian regulation of body temperature and negatively regulates thermogenic transcriptional programs in brown adipose tissue (BAT); imposes a circadian oscillation in BAT activity, increasing body temperature when awake and depressing thermogenesis during sleep. In concert with NR2E3, regulates transcriptional networks critical for photoreceptor development and function. In addition to its activity as a repressor, can also act as a transcriptional activator. In the ovarian granulosa cells acts as a transcriptional activator of STAR which plays a role in steroid biosynthesis. In collaboration with SP1, activates GJA1 transcription in a heme-independent manner. Represses the transcription of CYP2B10, CYP4A10 and CYP4A14. Represses the transcription of CES2. Represses and regulates the circadian expression of TSHB in a NCOR1-dependent manner. Negatively regulates the protein stability of NR3C1 and influences the time-dependent subcellular distribution of NR3C1, thereby affecting its transcriptional regulatory activity. Plays a critical role in the circadian control of neutrophilic inflammation in the lung; under resting, non-stress conditions, acts as a rhythmic repressor to limit inflammatory activity whereas in the presence of inflammatory triggers undergoes ubiquitin-mediated degradation thereby relieving inhibition of the inflammatory response. Plays a key role in the circadian regulation of microglial activation and neuroinflammation; suppresses microglial activation through the NF-kappaB pathway in the central nervous system. Plays a role in the regulation of the diurnal rhythms of lipid and protein metabolism in the skeletal muscle via transcriptional repression of genes controlling lipid and amino acid metabolism in the muscle. In Mus musculus (Mouse), this protein is Nuclear receptor subfamily 1 group D member 1 (Nr1d1).